A 602-amino-acid chain; its full sequence is Glutamyl-tRNA(Gln) amidotransferase subunit B, mitochondrial (602 aa).

The transit peptide at 1 to 52 (MLQQWLRQSPAAAGLLRCSRYRGPQAALLQLSPQRAPTYHAIRSLQTSAAES) directs the protein to the mitochondrion. The disordered stretch occupies residues 61–83 (QLKQGAKGLKAQKRQRRESEEAS).

It belongs to the GatB/GatE family. GatB subfamily. In terms of assembly, subunit of the heterotrimeric GatCAB amidotransferase (AdT) complex, composed of A, B and C subunits.

The protein localises to the mitochondrion. It carries out the reaction L-glutamyl-tRNA(Gln) + L-glutamine + ATP + H2O = L-glutaminyl-tRNA(Gln) + L-glutamate + ADP + phosphate + H(+). Functionally, allows the formation of correctly charged Gln-tRNA(Gln) through the transamidation of misacylated Glu-tRNA(Gln) in the mitochondria. The reaction takes place in the presence of glutamine and ATP through an activated gamma-phospho-Glu-tRNA(Gln). The chain is Glutamyl-tRNA(Gln) amidotransferase subunit B, mitochondrial from Aspergillus clavatus (strain ATCC 1007 / CBS 513.65 / DSM 816 / NCTC 3887 / NRRL 1 / QM 1276 / 107).